The sequence spans 122 residues: MKVSDRRKFEKANFDEFESALNNKNDLVHCPSITLFESIPTEVRSFYEDEKSGLIKVVKFRTGAMDRKRSFEKIVISVMVGKNVQKFLTFVEDEPDFQGGPIPSNKPRDGLHVVSSAYFEIQ.

This is an uncharacterized protein from Saccharomyces cerevisiae (strain ATCC 204508 / S288c) (Baker's yeast).